The following is a 1043-amino-acid chain: Peroxisomal ATPase PEX1 (1043 aa).

Positions 453-626 (ATPAIILDGK…SKNQIMKLNR (174 aa)) are AAA-cassette D1. Residues 461 to 468 (GKQGIGKT) and 738 to 745 (GYPGCGKT) contribute to the ATP site. The tract at residues 733–926 (GILLYGYPGC…CYNAYLKSVH (194 aa)) is AAA-cassette D2.

Belongs to the AAA ATPase family. In terms of assembly, interacts with PEX6; forming the PEX1-PEX6 AAA ATPase complex, which is composed of a heterohexamer formed by a trimer of PEX1-PEX6 dimers. The PEX1-PEX6 heterooligomers associate with the peroxisomal importomer via interaction of PEX6 with the peroxisomal membrane anchor PEX15.

Its subcellular location is the cytoplasm. It is found in the cytosol. The protein resides in the peroxisome membrane. It carries out the reaction ATP + H2O = ADP + phosphate + H(+). In terms of biological role, component of the PEX1-PEX6 AAA ATPase complex, a protein dislocase complex that mediates the ATP-dependent extraction of the PEX5 receptor from peroxisomal membranes, an essential step for PEX5 recycling. Specifically recognizes PEX5 monoubiquitinated at 'Cys-6', and pulls it out of the peroxisome lumen through the PEX2-PEX10-PEX12 retrotranslocation channel. Extraction by the PEX1-PEX6 AAA ATPase complex is accompanied by unfolding of the TPR repeats and release of bound cargo from PEX5. This chain is Peroxisomal ATPase PEX1, found in Saccharomyces cerevisiae (strain ATCC 204508 / S288c) (Baker's yeast).